We begin with the raw amino-acid sequence, 250 residues long: Ribonuclease HII (250 aa).

An RNase H type-2 domain is found at 66-250 (QLVAGVDEVG…SFAPVSEYEK (185 aa)). Residues Asp-72, Glu-73, and Asp-164 each coordinate a divalent metal cation.

The protein belongs to the RNase HII family. It depends on Mn(2+) as a cofactor. Requires Mg(2+) as cofactor.

The protein resides in the cytoplasm. It carries out the reaction Endonucleolytic cleavage to 5'-phosphomonoester.. In terms of biological role, endonuclease that specifically degrades the RNA of RNA-DNA hybrids. This is Ribonuclease HII from Lactobacillus gasseri (strain ATCC 33323 / DSM 20243 / BCRC 14619 / CIP 102991 / JCM 1131 / KCTC 3163 / NCIMB 11718 / NCTC 13722 / AM63).